A 578-amino-acid chain; its full sequence is MRLWLRGLVYQARRSSWGVFRIHTQPPPPPIPEVVATWEAISLGKRPVPEYFNFAHDVLDVWSQLEKTGHRPPNPAFWWVNGSGTEVKWTFEELGKQSRKAANILEGACGLKPGDRLMLVLPRLPEWWLTIVACMRTGVVMIPGISQLTQKDLKYRLQAARVKSIITSDALAPHVDAISADCPSLQSRLLVSDTSRPGWINFRELLRVASPEHNCLRTRSGDSMAIYFTSGTTGTPKMVEHSQCSYGLGFVASGRRLMALTESDIFWNTTDTGWVKAAWTLFSAWANGACVFVHELPQVDAQTILNTLCRFPITTICCVPTLFRLLVQEDLTRYKFQCLRHCLAGGEALNSDVRDKWKNQTGLEIHEGYGQSETVLICGNFRGSTIKSGSMGKASPPYDVQIVDEEGNVLPPGKEGNIAIRIKPTRPFCLFNCYLDNPEKTAASEQGDFYITGDRAHMDEDGYFWFVGRNDDVINSSSYRIGPVEVESALAEHPAVLESAVVSSPDPIRGEVVKAFIVLSPAYVSHDPEALTRELQEHVKTVTAPYKYPRKVAFISELPKTVSGKILRSKLRNQEWGR.

The transit peptide at 1–22 directs the protein to the mitochondrion; the sequence is MRLWLRGLVYQARRSSWGVFRI. Lys96 bears the N6-acetyllysine; alternate mark. Position 96 is an N6-succinyllysine; alternate (Lys96). At Lys151 the chain carries N6-acetyllysine. 229 to 237 serves as a coordination point for ATP; it reads TSGTTGTPK. Residue Lys335 is modified to N6-acetyllysine. ATP contacts are provided by residues 367-372, Asp454, Arg469, and Lys565; that span reads EGYGQS.

This sequence belongs to the ATP-dependent AMP-binding enzyme family. Mg(2+) is required as a cofactor. It depends on Mn(2+) as a cofactor.

The protein localises to the mitochondrion matrix. The catalysed reaction is a medium-chain fatty acid + ATP + CoA = a medium-chain fatty acyl-CoA + AMP + diphosphate. Its function is as follows. Catalyzes the activation of fatty acids by CoA to produce an acyl-CoA, the first step in fatty acid metabolism. In Rattus norvegicus (Rat), this protein is Acyl-coenzyme A synthetase ACSM5, mitochondrial (Acsm5).